A 66-amino-acid polypeptide reads, in one-letter code: Cold shock-like protein (66 aa).

Residues 3–62 (GKVKWFDSKKGYGFITKDEGGDVFVHWSAIEMEGFKTLKEGQVVEFEIQEGKKGPQAAHV) enclose the CSD domain.

Monomer.

Its subcellular location is the cytoplasm. The chain is Cold shock-like protein (csp) from Thermotoga maritima (strain ATCC 43589 / DSM 3109 / JCM 10099 / NBRC 100826 / MSB8).